Reading from the N-terminus, the 376-residue chain is Putative endoglucanase type K (376 aa).

Positions 1–18 (MRSYTLLALAGPLAVSAA) are cleaved as a signal peptide. The tract at residues 19 to 308 (SGSGHSTRYW…ATKPAQPVNK (290 aa)) is catalytic. The active-site Nucleophile is the D29. D140 (proton donor) is an active-site residue. Positions 229–332 (AFKGDTSASK…SCPAKTDATA (104 aa)) are disordered. Low complexity-rich tracts occupy residues 235-258 (SASK…AQPQ) and 291-306 (KPVA…AQPV). The linker stretch occupies residues 309-338 (PKTTQKVRGTKTRGSCPAKTDATAKASVVP). The CBM1 domain occupies 335 to 374 (SVVPAYYQCGGSKSAYPNGNLACATGSKCVKQNEYYSQCV).

The protein belongs to the glycosyl hydrolase 45 (cellulase K) family.

It carries out the reaction Endohydrolysis of (1-&gt;4)-beta-D-glucosidic linkages in cellulose, lichenin and cereal beta-D-glucans.. This chain is Putative endoglucanase type K, found in Fusarium oxysporum (Fusarium vascular wilt).